A 428-amino-acid chain; its full sequence is Stromal membrane-associated protein 2 (428 aa).

One can recognise an Arf-GAP domain in the interval 13-139 (QAVLGSLLSE…INTFRKEKDD (127 aa)). The C4-type zinc finger occupies 28-51 (CADCQAKGPRWASWNIGVFICIRC). Positions 161-172 (VKMPQKKEETQQ) are enriched in basic and acidic residues. Disordered stretches follow at residues 161 to 182 (VKMPQKKEETQQSRKSSPKSTE) and 222 to 258 (SRKVSGSMPTSGSAGSVPENLNLFPEPGGKGEEAGKK).

In terms of assembly, may interact with clathrin heavy chains.

Functionally, GTPase activating protein. May play a role in clathrin-dependent retrograde transport from early endosomes to the trans-Golgi network. The protein is Stromal membrane-associated protein 2 (SMAP2) of Gallus gallus (Chicken).